A 308-amino-acid polypeptide reads, in one-letter code: UDP-N-acetylenolpyruvoylglucosamine reductase 2 (308 aa).

The FAD-binding PCMH-type domain maps to 31–197; it reads RIGGPADYLV…AEVVMALRPA (167 aa). Arg-176 is a catalytic residue. The active-site Proton donor is the Ser-226. Glu-296 is an active-site residue.

It belongs to the MurB family. The cofactor is FAD.

It localises to the cytoplasm. It catalyses the reaction UDP-N-acetyl-alpha-D-muramate + NADP(+) = UDP-N-acetyl-3-O-(1-carboxyvinyl)-alpha-D-glucosamine + NADPH + H(+). The protein operates within cell wall biogenesis; peptidoglycan biosynthesis. In terms of biological role, cell wall formation. The chain is UDP-N-acetylenolpyruvoylglucosamine reductase 2 from Symbiobacterium thermophilum (strain DSM 24528 / JCM 14929 / IAM 14863 / T).